The chain runs to 547 residues: GID complex substrate-recognition subunit 10 (547 aa).

2 stretches are compositionally biased toward polar residues: residues 1–11 and 28–41; these read MPRSLDNFQNE and GFPN…SNSQ. Disordered regions lie at residues 1–42, 60–115, 169–217, and 285–313; these read MPRS…NSQR, EQDS…SNAT, RNSS…NPQS, and PAVL…QTPN. A compositionally biased stretch (basic residues) spans 99-108; sequence SASRQRRRSG. Positions 169–185 are enriched in polar residues; the sequence is RNSSTFGSNPNSVFSAQ. 3 stretches are compositionally biased toward low complexity: residues 186–199, 207–217, and 298–307; these read PTEP…SSFP, SRSISISNPQS, and SSSSASSYGS.

The protein belongs to the GID4/VID24 family. As to quaternary structure, substrate-recognition component of the GID/CTLH complex. In the absence of stress, the complex exists as an inactive anticipatory complex (GID(Ant)), composed of Gid1, the E3 ubiquitin-ligase Gid2, Gid5, Gid8, and the RING-like subunit Gid9, awaiting a substrate receptor to form the active E3 ligase complex. When cells are shifted to glucose-containing medium, the substrate receptor Gid4 is induced and becomes part of the complex, named GID(SR4). Additionally, Gid7 transforms the GID(SR4) E3 ligase core into a higher-order supramolecular assembly (Chelator-GID(SR4)). Under osmotic or heat stress, the substrate receptor Gid10 is induced and becomes part of the complex, named GID(SR10). Interacts with proteins that have an N-terminal Pro/N-degron.

Its subcellular location is the nucleus. Functionally, substrate-recognition component of the GID E3 ligase complex recruiting N termini and catalyzing ubiquitination of proteins targeted for degradation. GID E3 is regulated through assembly with interchangeable N-degron-binding substrate receptors induced by distinct environmental perturbations. Required for the adaptation to osmotic or heat stress. Specific for substrates with an N-terminal Pro (Pro/N-degron). The protein is GID complex substrate-recognition subunit 10 (gid10) of Schizosaccharomyces pombe (strain 972 / ATCC 24843) (Fission yeast).